Reading from the N-terminus, the 244-residue chain is Glutathione-independent glyoxalase hsp3101 (244 aa).

Active-site residues include Cys-139, His-140, and Glu-173.

The protein belongs to the peptidase C56 family. HSP31-like subfamily.

The protein resides in the cytoplasm. It localises to the nucleus. The enzyme catalyses methylglyoxal + H2O = (R)-lactate + H(+). Functionally, catalyzes the conversion of methylglyoxal (MG) to D-lactate in a single glutathione (GSH)-independent step. May play a role in detoxifying endogenously produced glyoxals. Involved in protection against reactive oxygen species (ROS). This Schizosaccharomyces pombe (strain 972 / ATCC 24843) (Fission yeast) protein is Glutathione-independent glyoxalase hsp3101.